The chain runs to 912 residues: MGFISNAILGKVTGLGTKQIERLREQGRAEPARHRRKLHEYEHTQGSRSHSSKDGSRKDRMSSEDKTRHKKLKHRSRQPGDKPTLPQPETDMVFGGLDKCPLYGVVMPMGHGKTTLAQEEGWIDCDSLITPSTKRRLAADALRKLADGDEYENAMAEMSSMMAKALQVLTPSKPAILLSHSVNLLKICQIPCLAILSLEDGVFEKNLRLRDEAEQCAARISKRHLEAAEGPGRPVITVQDNEHMRTVIYQIAESMDVELGAPRLLHPECSLPPGVGGTEWCDLTELVGMYESGRLPRAVLDYQINAQGLKAYRGYGFTMNDWAATAAHLVDNTCAADGAIPSLDNWPLTLEGIGKTFDMSEDIDGQALLAAHGGEDEAFTLGLLLHWKMYGLKSDTTGRLRLLYYVRRNRWDLVMRKVRQGVLGSGTFMGEPITLAERDILLSLHMLSSTSVSALVAKWRDEKMGYPSSRPSKRLMCHFDDILPHLVVQVPGSDPSYERAAWDVFLSGNLKPLRECAAGLLGECKLKRKHVISYLLGVRLLNEWEDEQGAHRVAREAMKQVATNWFRVGKIRDEWFDLIGAVLDGECRADDPIAQMAVMMTKTSSCQNLSGMPWGVRVAEAVQRIVMVGWCGLQMDQKVVLQQTENGVLPIVLGNREEDYIIELMKLGAPKYMTSVTGSEESVLATMAELADWSRSGVGLVLELVNAGSWLGQMSPKDRIALLANWATRRETTGVDSVLFGEILDRFSRQWLKRKFTPRAAEHLRNLGRISRRDGGLGIAERVYRGTVVPGKDGKSWNGKDAPRIKKEFVERVPKINLVACRNVLTSPKMGFKWNAHSLGMCGALVSCFLMGGDKHDIEGMCATVEGIKKHRVHPLASLPDWEQSYPEGAELDEAIEVGINDCMMMLEQARV.

2 stretches are compositionally biased toward basic and acidic residues: residues 20–32 (IERL…AEPA) and 39–67 (HEYE…EDKT). The interval 20-91 (IERLREQGRA…KPTLPQPETD (72 aa)) is disordered. Over residues 68–77 (RHKKLKHRSR) the composition is skewed to basic residues.

This is an uncharacterized protein from Penicillium chrysogenum virus (isolate Caston/2003) (PcV).